The sequence spans 196 residues: Lipoprotein signal peptidase (196 aa).

The next 3 helical transmembrane spans lie at 17-37 (SIII…IDNL), 73-93 (SNAI…YLMI), and 96-116 (NTIG…GNLI). Active-site residues include D126 and D144. A helical membrane pass occupies residues 135 to 155 (YSFPVFNLADCFITIGVIILI).

The protein belongs to the peptidase A8 family.

It localises to the cell inner membrane. The catalysed reaction is Release of signal peptides from bacterial membrane prolipoproteins. Hydrolyzes -Xaa-Yaa-Zaa-|-(S,diacylglyceryl)Cys-, in which Xaa is hydrophobic (preferably Leu), and Yaa (Ala or Ser) and Zaa (Gly or Ala) have small, neutral side chains.. Its pathway is protein modification; lipoprotein biosynthesis (signal peptide cleavage). Functionally, this protein specifically catalyzes the removal of signal peptides from prolipoproteins. This chain is Lipoprotein signal peptidase, found in Rickettsia akari (strain Hartford).